We begin with the raw amino-acid sequence, 461 residues long: MNATVPSAAPADLPAHRPATAVILAAGMGTRMKSDRPKVMHPLAGQPMLRYLLDNAASVFDRIVVVVGPGMEQVAALAAPHAVVVQQDRLGTAHAAAQAADLFGTGDVAVLYGDNPLITADSMRRMLACRAGEGNSEGAGLALMAMRPRDPGRYGRVVTQDGLVRRIVEWADASDEERAITLCNAGVLCAGAEDFRRWLGAVRNDNAQGEYYLGDVVAMAVAEGRQVRAVEAPEDELRGINSRAELAEAEACVQRRLRAAALDGGATLVAPETVFLAADTVLEPDVLVQPHVVFGPGVTVRRGAEIRAFSHLEGCVVGPGALIGPYARLRPGSDVGAAAHVGNFVELKATTLGAGAKANHLSYLGDATIGPATNIGAGTITCNYDGVFKHRTDIGAGCFVGSNAILVAPVSIGDGALVAAGSVITQDVLPDAMALGRARQTNKDGRGASLQAALRRKKEQG.

The interval 1–243 (MNATVPSAAP…EDELRGINSR (243 aa)) is pyrophosphorylase. UDP-N-acetyl-alpha-D-glucosamine contacts are provided by residues 24–27 (LAAG), lysine 38, glutamine 86, 91–92 (GT), 112–114 (YGD), glycine 155, glutamate 169, asparagine 184, and asparagine 241. Mg(2+) is bound at residue aspartate 114. Residue asparagine 241 coordinates Mg(2+). The interval 244–264 (AELAEAEACVQRRLRAAALDG) is linker. The segment at 265–461 (GATLVAPETV…AALRRKKEQG (197 aa)) is N-acetyltransferase. The UDP-N-acetyl-alpha-D-glucosamine site is built by arginine 330 and lysine 348. Residue histidine 360 is the Proton acceptor of the active site. Residues tyrosine 363 and asparagine 374 each coordinate UDP-N-acetyl-alpha-D-glucosamine. Residues alanine 377, 383-384 (NY), serine 402, alanine 420, and arginine 437 each bind acetyl-CoA.

This sequence in the N-terminal section; belongs to the N-acetylglucosamine-1-phosphate uridyltransferase family. The protein in the C-terminal section; belongs to the transferase hexapeptide repeat family. As to quaternary structure, homotrimer. Mg(2+) is required as a cofactor.

Its subcellular location is the cytoplasm. The catalysed reaction is alpha-D-glucosamine 1-phosphate + acetyl-CoA = N-acetyl-alpha-D-glucosamine 1-phosphate + CoA + H(+). The enzyme catalyses N-acetyl-alpha-D-glucosamine 1-phosphate + UTP + H(+) = UDP-N-acetyl-alpha-D-glucosamine + diphosphate. The protein operates within nucleotide-sugar biosynthesis; UDP-N-acetyl-alpha-D-glucosamine biosynthesis; N-acetyl-alpha-D-glucosamine 1-phosphate from alpha-D-glucosamine 6-phosphate (route II): step 2/2. It participates in nucleotide-sugar biosynthesis; UDP-N-acetyl-alpha-D-glucosamine biosynthesis; UDP-N-acetyl-alpha-D-glucosamine from N-acetyl-alpha-D-glucosamine 1-phosphate: step 1/1. It functions in the pathway bacterial outer membrane biogenesis; LPS lipid A biosynthesis. In terms of biological role, catalyzes the last two sequential reactions in the de novo biosynthetic pathway for UDP-N-acetylglucosamine (UDP-GlcNAc). The C-terminal domain catalyzes the transfer of acetyl group from acetyl coenzyme A to glucosamine-1-phosphate (GlcN-1-P) to produce N-acetylglucosamine-1-phosphate (GlcNAc-1-P), which is converted into UDP-GlcNAc by the transfer of uridine 5-monophosphate (from uridine 5-triphosphate), a reaction catalyzed by the N-terminal domain. This is Bifunctional protein GlmU from Gluconacetobacter diazotrophicus (strain ATCC 49037 / DSM 5601 / CCUG 37298 / CIP 103539 / LMG 7603 / PAl5).